Here is a 371-residue protein sequence, read N- to C-terminus: 3-isopropylmalate dehydrogenase (371 aa).

77-90 (GPKWDDNPPHLRPE) is a binding site for NAD(+). 4 residues coordinate substrate: R97, R107, R135, and D224. Residues D224, D248, and D252 each coordinate Mg(2+). Residue 282–294 (GSAPDIAGMNKAN) coordinates NAD(+).

Belongs to the isocitrate and isopropylmalate dehydrogenases family. LeuB type 1 subfamily. In terms of assembly, homodimer. Requires Mg(2+) as cofactor. It depends on Mn(2+) as a cofactor.

It localises to the cytoplasm. The catalysed reaction is (2R,3S)-3-isopropylmalate + NAD(+) = 4-methyl-2-oxopentanoate + CO2 + NADH. The protein operates within amino-acid biosynthesis; L-leucine biosynthesis; L-leucine from 3-methyl-2-oxobutanoate: step 3/4. In terms of biological role, catalyzes the oxidation of 3-carboxy-2-hydroxy-4-methylpentanoate (3-isopropylmalate) to 3-carboxy-4-methyl-2-oxopentanoate. The product decarboxylates to 4-methyl-2 oxopentanoate. The sequence is that of 3-isopropylmalate dehydrogenase from Geobacillus kaustophilus (strain HTA426).